The sequence spans 175 residues: Ferritin light chain (175 aa).

S2 is modified (N-acetylserine). The region spanning 7–156 (QNYSTEVEAA…DHLTNLRRLA (150 aa)) is the Ferritin-like diiron domain. Fe cation is bound by residues E54, E58, E61, and E64.

It belongs to the ferritin family. As to quaternary structure, oligomer of 24 subunits. There are two types of subunits: L (light) chain and H (heavy) chain. The major chain can be light or heavy, depending on the species and tissue type. The functional molecule forms a roughly spherical shell with a diameter of 12 nm and contains a central cavity into which the insoluble mineral iron core is deposited. Interacts with NCOA4.

The protein resides in the cytoplasmic vesicle. Its subcellular location is the autophagosome. It is found in the cytoplasm. It localises to the autolysosome. Functionally, stores iron in a soluble, non-toxic, readily available form. Important for iron homeostasis. Iron is taken up in the ferrous form and deposited as ferric hydroxides after oxidation. Also plays a role in delivery of iron to cells. Mediates iron uptake in capsule cells of the developing kidney. Delivery to lysosomes by the cargo receptor NCOA4 for autophagic degradation and release or iron. This Bos taurus (Bovine) protein is Ferritin light chain (FTL).